Reading from the N-terminus, the 396-residue chain is Elongation factor Tu (396 aa).

Residues 10 to 206 (KPHVNIGTIG…AVDSYIPEPV (197 aa)) form the tr-type G domain. Residues 19–26 (GHVDHGKT) are G1. Position 19–26 (19–26 (GHVDHGKT)) interacts with GTP. Position 26 (T26) interacts with Mg(2+). A G2 region spans residues 60 to 64 (GITIA). The segment at 81 to 84 (DCPG) is G3. GTP contacts are provided by residues 81-85 (DCPGH) and 136-139 (NKAD). The segment at 136–139 (NKAD) is G4. The interval 174–176 (SAL) is G5.

The protein belongs to the TRAFAC class translation factor GTPase superfamily. Classic translation factor GTPase family. EF-Tu/EF-1A subfamily. In terms of assembly, monomer.

Its subcellular location is the cytoplasm. The enzyme catalyses GTP + H2O = GDP + phosphate + H(+). In terms of biological role, GTP hydrolase that promotes the GTP-dependent binding of aminoacyl-tRNA to the A-site of ribosomes during protein biosynthesis. This chain is Elongation factor Tu, found in Geotalea uraniireducens (strain Rf4) (Geobacter uraniireducens).